We begin with the raw amino-acid sequence, 90 residues long: Probable Fe(2+)-trafficking protein (90 aa).

The protein belongs to the Fe(2+)-trafficking protein family.

Could be a mediator in iron transactions between iron acquisition and iron-requiring processes, such as synthesis and/or repair of Fe-S clusters in biosynthetic enzymes. The chain is Probable Fe(2+)-trafficking protein from Acidovorax ebreus (strain TPSY) (Diaphorobacter sp. (strain TPSY)).